We begin with the raw amino-acid sequence, 99 residues long: Protein translation factor SUI1 homolog (99 aa).

Belongs to the SUI1 family.

This is Protein translation factor SUI1 homolog from Picrophilus torridus (strain ATCC 700027 / DSM 9790 / JCM 10055 / NBRC 100828 / KAW 2/3).